We begin with the raw amino-acid sequence, 445 residues long: Methionine aminopeptidase 2-1 (445 aa).

Positions 1–86 (MAAQASEDLQ…VQSEPPRVPL (86 aa)) are disordered. Over residues 34–46 (GEAEDDSDDDADE) the composition is skewed to acidic residues. Positions 59–74 (AKKKKKRKSKKKKKGG) are enriched in basic residues. Residue histidine 198 participates in substrate binding. A divalent metal cation is bound by residues aspartate 218, aspartate 229, and histidine 298. Residue histidine 306 coordinates substrate. Residues glutamate 331 and glutamate 426 each coordinate a divalent metal cation.

It belongs to the peptidase M24A family. Methionine aminopeptidase eukaryotic type 2 subfamily. The cofactor is Co(2+). Zn(2+) serves as cofactor. Mn(2+) is required as a cofactor. Requires Fe(2+) as cofactor.

It is found in the cytoplasm. It catalyses the reaction Release of N-terminal amino acids, preferentially methionine, from peptides and arylamides.. Functionally, cotranslationally removes the N-terminal methionine from nascent proteins. The N-terminal methionine is often cleaved when the second residue in the primary sequence is small and uncharged (Met-Ala-, Cys, Gly, Pro, Ser, Thr, or Val). The sequence is that of Methionine aminopeptidase 2-1 from Aspergillus flavus (strain ATCC 200026 / FGSC A1120 / IAM 13836 / NRRL 3357 / JCM 12722 / SRRC 167).